We begin with the raw amino-acid sequence, 367 residues long: D-alanine--D-alanine ligase (367 aa).

One can recognise an ATP-grasp domain in the interval 141 to 346; the sequence is KNLFAQAGLR…YPELIERLIA (206 aa). 174–229 contacts ATP; that stretch reads ERELGYPCFVKPANAGSSVGISKCKQRGDLKAAFIEAFQYDRKIIIEEAIVGREIE. The Mg(2+) site is built by aspartate 300, glutamate 313, and asparagine 315.

It belongs to the D-alanine--D-alanine ligase family. Mg(2+) is required as a cofactor. The cofactor is Mn(2+).

The protein resides in the cytoplasm. The catalysed reaction is 2 D-alanine + ATP = D-alanyl-D-alanine + ADP + phosphate + H(+). It participates in cell wall biogenesis; peptidoglycan biosynthesis. In terms of biological role, cell wall formation. The sequence is that of D-alanine--D-alanine ligase from Geobacillus kaustophilus (strain HTA426).